Here is a 55-residue protein sequence, read N- to C-terminus: Large ribosomal subunit protein bL33 (55 aa).

The protein belongs to the bacterial ribosomal protein bL33 family.

This chain is Large ribosomal subunit protein bL33, found in Polaromonas sp. (strain JS666 / ATCC BAA-500).